The following is a 208-amino-acid chain: FMN-dependent NADH:quinone oxidoreductase 1 (208 aa).

FMN is bound at residue 17-19; that stretch reads SVS.

The protein belongs to the azoreductase type 1 family. As to quaternary structure, homodimer. FMN is required as a cofactor.

It catalyses the reaction 2 a quinone + NADH + H(+) = 2 a 1,4-benzosemiquinone + NAD(+). The enzyme catalyses N,N-dimethyl-1,4-phenylenediamine + anthranilate + 2 NAD(+) = 2-(4-dimethylaminophenyl)diazenylbenzoate + 2 NADH + 2 H(+). Quinone reductase that provides resistance to thiol-specific stress caused by electrophilic quinones. Functionally, also exhibits azoreductase activity. Catalyzes the reductive cleavage of the azo bond in aromatic azo compounds to the corresponding amines. This Listeria innocua serovar 6a (strain ATCC BAA-680 / CLIP 11262) protein is FMN-dependent NADH:quinone oxidoreductase 1.